A 526-amino-acid polypeptide reads, in one-letter code: Peptide chain release factor 3 (526 aa).

The region spanning 9–277 (DKRRTFAIIS…GIVEWAPKPQ (269 aa)) is the tr-type G domain. GTP-binding positions include 18–25 (SHPDAGKT), 86–90 (DTPGH), and 140–143 (NKLD).

The protein belongs to the TRAFAC class translation factor GTPase superfamily. Classic translation factor GTPase family. PrfC subfamily.

Its subcellular location is the cytoplasm. Functionally, increases the formation of ribosomal termination complexes and stimulates activities of RF-1 and RF-2. It binds guanine nucleotides and has strong preference for UGA stop codons. It may interact directly with the ribosome. The stimulation of RF-1 and RF-2 is significantly reduced by GTP and GDP, but not by GMP. This chain is Peptide chain release factor 3, found in Shewanella sediminis (strain HAW-EB3).